Here is a 405-residue protein sequence, read N- to C-terminus: Na(+)-translocating NADH-quinone reductase subunit F (405 aa).

Residues 3–23 traverse the membrane as a helical segment; the sequence is IILGIVMFTVIVLVLALMILF. In terms of domain architecture, 2Fe-2S ferredoxin-type spans 32 to 124; that stretch reads GDITIKVNGE…DMDIEVPEEV (93 aa). [2Fe-2S] cluster-binding residues include Cys67, Cys73, Cys76, and Cys108. Residues 127–267 enclose the FAD-binding FR-type domain; the sequence is VKKWECTVIS…SGPFGEFFAK (141 aa).

The protein belongs to the NqrF family. As to quaternary structure, composed of six subunits; NqrA, NqrB, NqrC, NqrD, NqrE and NqrF. Requires [2Fe-2S] cluster as cofactor. FAD is required as a cofactor.

It is found in the cell inner membrane. It catalyses the reaction a ubiquinone + n Na(+)(in) + NADH + H(+) = a ubiquinol + n Na(+)(out) + NAD(+). In terms of biological role, NQR complex catalyzes the reduction of ubiquinone-1 to ubiquinol by two successive reactions, coupled with the transport of Na(+) ions from the cytoplasm to the periplasm. The first step is catalyzed by NqrF, which accepts electrons from NADH and reduces ubiquinone-1 to ubisemiquinone by a one-electron transfer pathway. The chain is Na(+)-translocating NADH-quinone reductase subunit F from Neisseria meningitidis serogroup C / serotype 2a (strain ATCC 700532 / DSM 15464 / FAM18).